We begin with the raw amino-acid sequence, 204 residues long: Ribosomal RNA small subunit methyltransferase G (204 aa).

S-adenosyl-L-methionine contacts are provided by residues G69, F74, 123 to 124 (IE), and R137.

The protein belongs to the methyltransferase superfamily. RNA methyltransferase RsmG family.

The protein resides in the cytoplasm. The enzyme catalyses guanosine(527) in 16S rRNA + S-adenosyl-L-methionine = N(7)-methylguanosine(527) in 16S rRNA + S-adenosyl-L-homocysteine. Functionally, specifically methylates the N7 position of guanine in position 527 of 16S rRNA. This is Ribosomal RNA small subunit methyltransferase G from Ruegeria pomeroyi (strain ATCC 700808 / DSM 15171 / DSS-3) (Silicibacter pomeroyi).